A 310-amino-acid chain; its full sequence is Methionyl-tRNA formyltransferase (310 aa).

111-114 (SILP) lines the (6S)-5,6,7,8-tetrahydrofolate pocket.

Belongs to the Fmt family.

The enzyme catalyses L-methionyl-tRNA(fMet) + (6R)-10-formyltetrahydrofolate = N-formyl-L-methionyl-tRNA(fMet) + (6S)-5,6,7,8-tetrahydrofolate + H(+). Functionally, attaches a formyl group to the free amino group of methionyl-tRNA(fMet). The formyl group appears to play a dual role in the initiator identity of N-formylmethionyl-tRNA by promoting its recognition by IF2 and preventing the misappropriation of this tRNA by the elongation apparatus. The sequence is that of Methionyl-tRNA formyltransferase from Finegoldia magna (strain ATCC 29328 / DSM 20472 / WAL 2508) (Peptostreptococcus magnus).